Consider the following 811-residue polypeptide: Myb-like DNA-binding protein BAS1 (811 aa).

In terms of domain architecture, Myb-like spans 34 to 110 (HRKNGRNSWS…DVRKRWTGSL (77 aa)). HTH myb-type domains follow at residues 111 to 165 (DPNL…GPGS) and 166 to 218 (KGRL…TMVV). 2 DNA-binding regions (H-T-H motif) span residues 138–161 (WLSI…IEVL) and 191–214 (WRKI…RKII). Over residues 237-264 (DMTDGKLRQHPIADSDIRSDSTPNKEEQ) the composition is skewed to basic and acidic residues. Disordered regions lie at residues 237 to 320 (DMTD…SAPP), 348 to 379 (SQMN…DEHM), 535 to 713 (ATSH…LRDE), and 782 to 811 (LHNE…LNPS). Low complexity predominate over residues 265–275 (LQLSQQNNPSL). The segment covering 282 to 298 (NVKENESSKLPRLKDND) has biased composition (basic and acidic residues). 3 stretches are compositionally biased toward polar residues: residues 348-366 (SQMN…QTSL), 535-613 (ATSH…TSGS), and 653-664 (LNPSPNSVRSNG). Basic and acidic residues predominate over residues 782–794 (LHNEAKKTSEHDM).

Monomer.

The protein resides in the nucleus. In terms of biological role, activates HIS4 transcription only in combination with PHO2/BAS2. BAS1 is also involved in the regulation of the purine biosynthesis pathway. The chain is Myb-like DNA-binding protein BAS1 (BAS1) from Saccharomyces cerevisiae (strain ATCC 204508 / S288c) (Baker's yeast).